The primary structure comprises 469 residues: MRLVWFRRDLRSFDNTALTAALNSGDPVAAMYIATPEQWHQHHLAPIQADLIWRRLAELQQELAALNVPLFYQQVADFQAAAVAVSQLAKTLNATQVLANRDYELDEQQRDQLAQQLLSEQGIIWSAFDDKCVLPPGSVRTKQGEFFKVFTPFKRAWLTLFQPPVIGKNRPVALWNVPSALAELVWHPEQAFDYPRIDSTPWAADFETVRAQLRDFCRERVQDYHQARDFPAREGTSSLSPYLAIGVLSARQCVARLYHESSMGELSEGAQVWLSELIWREFYQHLVAIEPNLSKSRDFVEWGARLEWWNDNEKFQLWCEGKTGYPIVDAAMRQLNQTGWMHNRLRMIVASFLTKDLHIDWRWGERYFMSRLIDGDYAANNGGWQWCASTGCDGQPYFRIFNPVSQGEKFDPNGDFIRRWVPELRSVSSAYIHQPWTYPAVNSVLYPARLVDHKQEREVTLRLYKTAKG.

In terms of domain architecture, Photolyase/cryptochrome alpha/beta spans 1-133 (MRLVWFRRDL…IWSAFDDKCV (133 aa)). Glu-107 is a binding site for (6R)-5,10-methylene-5,6,7,8-tetrahydrofolate.

Belongs to the DNA photolyase class-1 family. As to quaternary structure, monomer. Requires FAD as cofactor. (6R)-5,10-methylene-5,6,7,8-tetrahydrofolate serves as cofactor.

It catalyses the reaction cyclobutadipyrimidine (in DNA) = 2 pyrimidine residues (in DNA).. Its function is as follows. Involved in repair of UV radiation-induced DNA damage. Catalyzes the light-dependent monomerization (300-600 nm) of cyclobutyl pyrimidine dimers (in cis-syn configuration), which are formed between adjacent bases on the same DNA strand upon exposure to ultraviolet radiation. The protein is Deoxyribodipyrimidine photo-lyase (phrA) of Vibrio cholerae serotype O1 (strain ATCC 39315 / El Tor Inaba N16961).